Here is a 125-residue protein sequence, read N- to C-terminus: Small ribosomal subunit protein uS13 (125 aa).

The protein belongs to the universal ribosomal protein uS13 family. In terms of assembly, part of the 30S ribosomal subunit. Forms a loose heterodimer with protein S19. Forms two bridges to the 50S subunit in the 70S ribosome.

In terms of biological role, located at the top of the head of the 30S subunit, it contacts several helices of the 16S rRNA. In the 70S ribosome it contacts the 23S rRNA (bridge B1a) and protein L5 of the 50S subunit (bridge B1b), connecting the 2 subunits; these bridges are implicated in subunit movement. Contacts the tRNAs in the A and P-sites. The sequence is that of Small ribosomal subunit protein uS13 from Rickettsia prowazekii (strain Madrid E).